The sequence spans 374 residues: Ribosomal RNA large subunit methyltransferase G (374 aa).

The protein belongs to the methyltransferase superfamily. RlmG family.

The protein resides in the cytoplasm. It catalyses the reaction guanosine(1835) in 23S rRNA + S-adenosyl-L-methionine = N(2)-methylguanosine(1835) in 23S rRNA + S-adenosyl-L-homocysteine + H(+). Its function is as follows. Specifically methylates the guanine in position 1835 (m2G1835) of 23S rRNA. The protein is Ribosomal RNA large subunit methyltransferase G of Pseudomonas fluorescens (strain ATCC BAA-477 / NRRL B-23932 / Pf-5).